We begin with the raw amino-acid sequence, 329 residues long: MFSIGFIIIAVIIVVALLILFSFVPVGLWISALAAGVHVGIGTLVGMRLRRVSPRKVIAPLIKAHKAGLNLTTNQLESHYLAGGNVDRVVDANIAAQRADIDLPFERGAAIDLAGRDVLEAVQMSVNPKVIETPFIAGVAMNGIEVKAKARITVRANIARLVGGAGEETIIARVGEGIVSTIGSSEHHTEVLENPDNISKTVLSKGLDSGTAFEILSIDIADVDISKNIGADLQTEQALADKNIAQAKAEERRAMAVASEQEMKARVQEMRAKVVEAESEVPLAMAEALRSGNIGVKDYYNLKNIEADTGMRNAINKRTDQNDDESPQQ.

Transmembrane regions (helical) follow at residues 4-24 and 26-46; these read IGFI…FSFV and VGLW…TLVG.

This sequence belongs to the flotillin-like FloA family. Homooligomerizes.

Its subcellular location is the cell membrane. The protein localises to the membrane raft. In terms of biological role, found in functional membrane microdomains (FMM) that may be equivalent to eukaryotic membrane rafts. FMMs are highly dynamic and increase in number as cells age. Flotillins are thought to be important factors in membrane fluidity. The chain is Flotillin-like protein FloA from Staphylococcus epidermidis (strain ATCC 35984 / DSM 28319 / BCRC 17069 / CCUG 31568 / BM 3577 / RP62A).